A 93-amino-acid chain; its full sequence is Acylphosphatase (93 aa).

An intrachain disulfide couples Cys-5 to Cys-49. An Acylphosphatase-like domain is found at 5 to 93 (CTIAWIYGRV…ETLTDFSIRY (89 aa)). Residues Arg-20 and Asn-38 contribute to the active site.

Belongs to the acylphosphatase family.

The enzyme catalyses an acyl phosphate + H2O = a carboxylate + phosphate + H(+). The chain is Acylphosphatase from Salmonella arizonae (strain ATCC BAA-731 / CDC346-86 / RSK2980).